We begin with the raw amino-acid sequence, 517 residues long: Serine hydroxymethyltransferase 1, mitochondrial (517 aa).

The N-terminal 30 residues, 1-30 (MAMAMALRRLSSSIDKPIRPLIRSTSCYMS), are a transit peptide targeting the mitochondrion. Lys286 is subject to N6-(pyridoxal phosphate)lysine.

This sequence belongs to the SHMT family. In terms of assembly, homotetramer. Interacts with GLU1. Interacts with UBP16. Pyridoxal 5'-phosphate serves as cofactor. Post-translationally, ubiquitinated. As to expression, ubiquitous. Mostly expressed in leaves, less abundant in stems, flowers and siliques, and barely detectable in roots.

The protein localises to the mitochondrion. It localises to the cytoplasm. The enzyme catalyses (6R)-5,10-methylene-5,6,7,8-tetrahydrofolate + glycine + H2O = (6S)-5,6,7,8-tetrahydrofolate + L-serine. The protein operates within one-carbon metabolism; tetrahydrofolate interconversion. In terms of biological role, functions in the photorespiratory pathway in catalyzing the interconversion of serine and glycine. Involved in controlling cell damage caused by abiotic stress, such as high light and salt and the hypersensitive defense response of plants. This is Serine hydroxymethyltransferase 1, mitochondrial from Arabidopsis thaliana (Mouse-ear cress).